Reading from the N-terminus, the 443-residue chain is Xaa-Pro dipeptidase (443 aa).

Mn(2+) is bound by residues D246, D257, H339, E384, and E423.

It belongs to the peptidase M24B family. Bacterial-type prolidase subfamily. Requires Mn(2+) as cofactor.

The catalysed reaction is Xaa-L-Pro dipeptide + H2O = an L-alpha-amino acid + L-proline. Functionally, splits dipeptides with a prolyl residue in the C-terminal position. The sequence is that of Xaa-Pro dipeptidase from Escherichia coli (strain 55989 / EAEC).